A 90-amino-acid chain; its full sequence is Small ribosomal subunit protein bS16 (90 aa).

This sequence belongs to the bacterial ribosomal protein bS16 family.

This chain is Small ribosomal subunit protein bS16, found in Anoxybacillus flavithermus (strain DSM 21510 / WK1).